We begin with the raw amino-acid sequence, 197 residues long: dITP/XTP pyrophosphatase (197 aa).

10 to 15 (TKNQGK) contributes to the substrate binding site. The active-site Proton acceptor is the Asp-70. Asp-70 is a binding site for Mg(2+). Substrate contacts are provided by residues Ser-71, 151–154 (FGYD), Lys-173, and 178–179 (HR).

Belongs to the HAM1 NTPase family. As to quaternary structure, homodimer. Mg(2+) serves as cofactor.

The enzyme catalyses XTP + H2O = XMP + diphosphate + H(+). The catalysed reaction is dITP + H2O = dIMP + diphosphate + H(+). It carries out the reaction ITP + H2O = IMP + diphosphate + H(+). Its function is as follows. Pyrophosphatase that catalyzes the hydrolysis of nucleoside triphosphates to their monophosphate derivatives, with a high preference for the non-canonical purine nucleotides XTP (xanthosine triphosphate), dITP (deoxyinosine triphosphate) and ITP. Seems to function as a house-cleaning enzyme that removes non-canonical purine nucleotides from the nucleotide pool, thus preventing their incorporation into DNA/RNA and avoiding chromosomal lesions. This Symbiobacterium thermophilum (strain DSM 24528 / JCM 14929 / IAM 14863 / T) protein is dITP/XTP pyrophosphatase.